The sequence spans 159 residues: 6,7-dimethyl-8-ribityllumazine synthase (159 aa).

5-amino-6-(D-ribitylamino)uracil is bound by residues Phe-23, 61 to 63, and 85 to 87; these read SFE and AVI. 90 to 91 contacts (2S)-2-hydroxy-3-oxobutyl phosphate; that stretch reads DT. His-93 functions as the Proton donor in the catalytic mechanism. Position 118 (Phe-118) interacts with 5-amino-6-(D-ribitylamino)uracil. Arg-132 is a binding site for (2S)-2-hydroxy-3-oxobutyl phosphate.

This sequence belongs to the DMRL synthase family.

The enzyme catalyses (2S)-2-hydroxy-3-oxobutyl phosphate + 5-amino-6-(D-ribitylamino)uracil = 6,7-dimethyl-8-(1-D-ribityl)lumazine + phosphate + 2 H2O + H(+). It functions in the pathway cofactor biosynthesis; riboflavin biosynthesis; riboflavin from 2-hydroxy-3-oxobutyl phosphate and 5-amino-6-(D-ribitylamino)uracil: step 1/2. In terms of biological role, catalyzes the formation of 6,7-dimethyl-8-ribityllumazine by condensation of 5-amino-6-(D-ribitylamino)uracil with 3,4-dihydroxy-2-butanone 4-phosphate. This is the penultimate step in the biosynthesis of riboflavin. This chain is 6,7-dimethyl-8-ribityllumazine synthase, found in Synechococcus sp. (strain RCC307).